The sequence spans 231 residues: Beta-casein (231 aa).

Positions 1–15 are cleaved as a signal peptide; sequence MKVFILACLVALALA. Residue Ser-24 is modified to Phosphoserine. Thr-27 is subject to Phosphothreonine. Phosphoserine is present on residues Ser-29, Ser-31, and Ser-32.

Belongs to the beta-casein family. As to expression, mammary gland specific. Secreted in milk.

It localises to the secreted. Functionally, important role in determination of the surface properties of the casein micelles. In Rattus norvegicus (Rat), this protein is Beta-casein (Csn2).